The sequence spans 127 residues: Protein ApaG (127 aa).

The region spanning 3-127 (DDPRYRVEVE…FVLSVPRTLH (125 aa)) is the ApaG domain.

The polypeptide is Protein ApaG (Xanthomonas axonopodis pv. citri (strain 306)).